The chain runs to 127 residues: Large ribosomal subunit protein bL17 (127 aa).

The protein belongs to the bacterial ribosomal protein bL17 family. As to quaternary structure, part of the 50S ribosomal subunit. Contacts protein L32.

The chain is Large ribosomal subunit protein bL17 from Limosilactobacillus reuteri (strain DSM 20016) (Lactobacillus reuteri).